A 1408-amino-acid chain; its full sequence is DNA-directed RNA polymerase subunit beta' (1408 aa).

The Zn(2+) site is built by cysteine 70, cysteine 72, cysteine 85, and cysteine 88. 3 residues coordinate Mg(2+): aspartate 458, aspartate 460, and aspartate 462. Zn(2+)-binding residues include cysteine 813, cysteine 887, cysteine 894, and cysteine 897. The interval 1387–1408 (AELEAATATAPADAGGDSPATE) is disordered. Positions 1389–1408 (LEAATATAPADAGGDSPATE) are enriched in low complexity.

It belongs to the RNA polymerase beta' chain family. The RNAP catalytic core consists of 2 alpha, 1 beta, 1 beta' and 1 omega subunit. When a sigma factor is associated with the core the holoenzyme is formed, which can initiate transcription. Mg(2+) is required as a cofactor. It depends on Zn(2+) as a cofactor.

It catalyses the reaction RNA(n) + a ribonucleoside 5'-triphosphate = RNA(n+1) + diphosphate. Its function is as follows. DNA-dependent RNA polymerase catalyzes the transcription of DNA into RNA using the four ribonucleoside triphosphates as substrates. This chain is DNA-directed RNA polymerase subunit beta', found in Polaromonas sp. (strain JS666 / ATCC BAA-500).